Reading from the N-terminus, the 261-residue chain is Glutamate racemase (261 aa).

Substrate is bound by residues 7 to 8 (DS) and 39 to 40 (YG). Cys71 serves as the catalytic Proton donor/acceptor. Substrate is bound at residue 72–73 (NT). The Proton donor/acceptor role is filled by Cys184. 185-186 (TH) serves as a coordination point for substrate.

It belongs to the aspartate/glutamate racemases family.

The enzyme catalyses L-glutamate = D-glutamate. The protein operates within cell wall biogenesis; peptidoglycan biosynthesis. Its function is as follows. Provides the (R)-glutamate required for cell wall biosynthesis. In Aliarcobacter butzleri (strain RM4018) (Arcobacter butzleri), this protein is Glutamate racemase.